A 459-amino-acid polypeptide reads, in one-letter code: Exodeoxyribonuclease 7 large subunit (459 aa).

The protein belongs to the XseA family. In terms of assembly, heterooligomer composed of large and small subunits.

It is found in the cytoplasm. The enzyme catalyses Exonucleolytic cleavage in either 5'- to 3'- or 3'- to 5'-direction to yield nucleoside 5'-phosphates.. Bidirectionally degrades single-stranded DNA into large acid-insoluble oligonucleotides, which are then degraded further into small acid-soluble oligonucleotides. This Pseudomonas aeruginosa (strain UCBPP-PA14) protein is Exodeoxyribonuclease 7 large subunit.